The primary structure comprises 188 residues: Peptidyl-prolyl cis-trans isomerase (188 aa).

An N-terminal signal peptide occupies residues 1 to 20; it reads MLKRVAIVLGGLLISAHALA. The 161-residue stretch at 21–181 folds into the PPIase cyclophilin-type domain; that stretch reads NTMVEMKTNL…QPVKIISVQI (161 aa).

The protein belongs to the cyclophilin-type PPIase family.

The protein localises to the periplasm. The catalysed reaction is [protein]-peptidylproline (omega=180) = [protein]-peptidylproline (omega=0). In terms of biological role, PPIases accelerate the folding of proteins. It catalyzes the cis-trans isomerization of proline imidic peptide bonds in oligopeptides. This protein is not essential for growth. Presumably plays a role in signal transduction. The polypeptide is Peptidyl-prolyl cis-trans isomerase (rotA) (Acinetobacter baylyi (strain ATCC 33305 / BD413 / ADP1)).